The sequence spans 130 residues: Small ribosomal subunit protein uS8 (130 aa).

The protein belongs to the universal ribosomal protein uS8 family. As to quaternary structure, part of the 30S ribosomal subunit. Contacts proteins S5 and S12.

Its function is as follows. One of the primary rRNA binding proteins, it binds directly to 16S rRNA central domain where it helps coordinate assembly of the platform of the 30S subunit. The polypeptide is Small ribosomal subunit protein uS8 (Shewanella pealeana (strain ATCC 700345 / ANG-SQ1)).